Consider the following 135-residue polypeptide: MLSPKRVKWRKQFVGRATGFAVRGANLDFGDYGLQAVEEGRLTARQLEAGRIAISRSVKRGGKIWCRVFPNIPVTKKPAETRMGSGKGNPELWVARVLPGKVLFEMNGVTREQAKEAFERAAHKLPFKTRFLVRE.

This sequence belongs to the universal ribosomal protein uL16 family. As to quaternary structure, part of the 50S ribosomal subunit.

Functionally, binds 23S rRNA and is also seen to make contacts with the A and possibly P site tRNAs. This Bdellovibrio bacteriovorus (strain ATCC 15356 / DSM 50701 / NCIMB 9529 / HD100) protein is Large ribosomal subunit protein uL16.